The primary structure comprises 688 residues: Nucleolar protein 10 (688 aa).

The residue at position 1 (Met-1) is an N-acetylmethionine. At Ser-25 the chain carries Phosphoserine. WD repeat units follow at residues 44-82, 88-124, 127-163, 170-205, 219-258, 262-300, and 304-341; these read ELIQ…CYDT, KFER…FHSQ, FYYK…RLNL, NPLQ…CWDP, NSVT…LYDL, KPLL…MWNK, and KIFT…IYYI. Residues 423–446 adopt a coiled-coil conformation; that stretch reads EYRKDKIRQKIEETRAQRVQLKKL. Ser-475 is modified (phosphoserine). A Phosphothreonine modification is found at Thr-481. Ser-514 is modified (phosphoserine). Coiled coils occupy residues 514-589 and 640-673; these read SEKR…TVLK and SKQL…LRRS. Disordered regions lie at residues 529-557 and 645-688; these read LREK…EKAW and FTLK…RSFH. The span at 648–663 shows a compositional bias: basic and acidic residues; the sequence is KRSEQQKKQQEAEKLH. Over residues 664-688 the composition is skewed to basic residues; that stretch reads RQERKRLRRSAGHLKSRHKRGRSFH.

It belongs to the WD repeat NOL10/ENP2 family.

It localises to the nucleus. It is found in the nucleolus. This Homo sapiens (Human) protein is Nucleolar protein 10 (NOL10).